We begin with the raw amino-acid sequence, 334 residues long: Spermatogenesis-associated protein 32 (334 aa).

Residues 24–98 (SDHHRHHHHH…TESPEQQNYR (75 aa)) form a disordered region. Acidic residues predominate over residues 37 to 47 (ENEDEDTEVEA). Over residues 48 to 60 (ELPRTEPPPKVDP) the composition is skewed to basic and acidic residues. The segment covering 77-98 (SKTTPETEGDSYTESPEQQNYR) has biased composition (polar residues). Residues serine 135 and serine 138 each carry the phosphoserine modification.

Interacts with syntaxin-1 and ACTB. As to expression, highly expressed in the testis and weakly in the brain and heart.

This chain is Spermatogenesis-associated protein 32 (Spata32), found in Mus musculus (Mouse).